A 68-amino-acid polypeptide reads, in one-letter code: METIIRRFSPKEKEKEKEKEEKDEKSKDKKEPIKTRSKSKNDEEEEEDEQELVQGKPKGNSKNIKTKK.

The disordered stretch occupies residues 1-68; the sequence is METIIRRFSP…GNSKNIKTKK (68 aa). Residues 9–34 are compositionally biased toward basic and acidic residues; it reads SPKEKEKEKEKEEKDEKSKDKKEPIK. Residues 42 to 51 are compositionally biased toward acidic residues; that stretch reads DEEEEEDEQE.

This is an uncharacterized protein from Dictyostelium discoideum (Social amoeba).